We begin with the raw amino-acid sequence, 228 residues long: MSKSHLLKYLLISPNLPVGGFCYSEGLESYLNTKDLKDSNSVKELIISELKIGQIRLDARLLLDFFDIFNELNEDKNFKNNLQKLLSLDKWILSSKDSVEMRAQQIQMANSLFDLNKEFGFEYLYKKNKKNSWPLAWSWSCYCFEITKLEMVETFLYAWSANQLSAALRIIPIGSTKAQLIQRDLLEIISKVSREIMDKEIDDIYFGNVGLAMAQQNHNELYTKLFRN.

This sequence belongs to the UreF family. In terms of assembly, ureD, UreF and UreG form a complex that acts as a GTP-hydrolysis-dependent molecular chaperone, activating the urease apoprotein by helping to assemble the nickel containing metallocenter of UreC. The UreE protein probably delivers the nickel.

The protein resides in the cytoplasm. Required for maturation of urease via the functional incorporation of the urease nickel metallocenter. The sequence is that of Urease accessory protein UreF from Prochlorococcus marinus (strain MIT 9215).